Here is a 253-residue protein sequence, read N- to C-terminus: TCF3 fusion partner (253 aa).

Disordered regions lie at residues 49-72 (SGGL…GRRR) and 142-211 (DEGS…PELA). S167 carries the phosphoserine modification. Residues 170 to 181 (RRTPAPPEPGSP) show a composition bias toward pro residues. T172 carries the post-translational modification Phosphothreonine. Phosphoserine occurs at positions 180 and 188. Position 207 is a phosphothreonine (T207). A Glycyl lysine isopeptide (Lys-Gly) (interchain with G-Cter in SUMO2) cross-link involves residue K216. The interval 234 to 253 (VSRGPDKLLPYPTLASPASD) is disordered. S249 and S252 each carry phosphoserine.

As to quaternary structure, interacts with NOL3; translocates NOL3 into the nucleus and negatively regulated TFPT-induced cell death. Component of the chromatin remodeling INO80 complex; specifically part of a complex module associated with the N-terminus of INO80.

It is found in the nucleus. In terms of biological role, appears to promote apoptosis in a p53/TP53-independent manner. Its function is as follows. Putative regulatory component of the chromatin remodeling INO80 complex which is involved in transcriptional regulation, DNA replication and probably DNA repair. The sequence is that of TCF3 fusion partner (TFPT) from Homo sapiens (Human).